A 215-amino-acid chain; its full sequence is MNQTLLSKFGKPIERIKNAILALKSGQGVIILDDEERENEGDLVFACENMTVEQMALSIRYGSGIVCLCITESKRKQLNLPMMVKKNTSAYRTGFTVTIEASKGISTGVSAKDRLTTIKTAIADDAKPSDLNRPGHVFPLRAHKGGVLSRPGHTEAAIEIVSLAGFKPAGVICELTNKDGTMARTPEIIKFSENKKMQVLTIQDLIFYIKNINHL.

Residues 37-38 (RE), D42, 150-154 (RPGHT), and E174 each bind D-ribulose 5-phosphate. E38 is a binding site for Mg(2+). Residue H153 participates in Mg(2+) binding.

The protein belongs to the DHBP synthase family. Homodimer. It depends on Mg(2+) as a cofactor. Mn(2+) serves as cofactor.

It carries out the reaction D-ribulose 5-phosphate = (2S)-2-hydroxy-3-oxobutyl phosphate + formate + H(+). Its pathway is cofactor biosynthesis; riboflavin biosynthesis; 2-hydroxy-3-oxobutyl phosphate from D-ribulose 5-phosphate: step 1/1. In terms of biological role, catalyzes the conversion of D-ribulose 5-phosphate to formate and 3,4-dihydroxy-2-butanone 4-phosphate. This Buchnera aphidicola subsp. Acyrthosiphon pisum (strain 5A) protein is 3,4-dihydroxy-2-butanone 4-phosphate synthase.